The chain runs to 337 residues: Protein SphX (337 aa).

Residues 1–30 (MTTLKPALRRAAVLLPIAAVASSLFPIQEA) form the signal peptide.

Belongs to the PstS family. Post-translationally, the N-terminus is blocked.

It is found in the cell inner membrane. Functionally, may be involved in the system for phosphate transport across the cytoplasmic membrane. In Synechococcus elongatus (strain ATCC 33912 / PCC 7942 / FACHB-805) (Anacystis nidulans R2), this protein is Protein SphX (sphX).